The sequence spans 277 residues: Anamorsin homolog (277 aa).

The N-terminal SAM-like domain stretch occupies residues Met-1–Val-134. Residues Ser-135–Val-191 form a linker region. [2Fe-2S] cluster is bound by residues Cys-199, Cys-210, Cys-213, and Cys-215. The interval Cys-199–Cys-215 is fe-S binding site A. Residues Cys-238, Cys-241, Cys-249, and Cys-252 each coordinate [4Fe-4S] cluster. Short sequence motifs (cx2C motif) lie at residues Cys-238 to Cys-241 and Cys-249 to Cys-252. The fe-S binding site B stretch occupies residues Cys-238 to Cys-252.

Belongs to the anamorsin family. As to quaternary structure, monomer. [2Fe-2S] cluster serves as cofactor. Requires [4Fe-4S] cluster as cofactor.

The protein localises to the cytoplasm. It localises to the mitochondrion intermembrane space. In terms of biological role, component of the cytosolic iron-sulfur (Fe-S) protein assembly (CIA) machinery. Required for the maturation of extramitochondrial Fe-S proteins. Part of an electron transfer chain functioning in an early step of cytosolic Fe-S biogenesis, facilitating the de novo assembly of a [4Fe-4S] cluster on the cytosolic Fe-S scaffold complex. Electrons are transferred from NADPH via a FAD- and FMN-containing diflavin oxidoreductase. Together with the diflavin oxidoreductase, also required for the assembly of the diferric tyrosyl radical cofactor of ribonucleotide reductase (RNR), probably by providing electrons for reduction during radical cofactor maturation in the catalytic small subunit. This is Anamorsin homolog from Phytophthora infestans (strain T30-4) (Potato late blight agent).